We begin with the raw amino-acid sequence, 529 residues long: Peptide chain release factor 3 (529 aa).

In terms of domain architecture, tr-type G spans 10–278 (ARRRTFAIIS…NFVDLAPAPR (269 aa)). GTP contacts are provided by residues 19 to 26 (SHPDAGKT), 87 to 91 (DTPGH), and 141 to 144 (NKLD).

It belongs to the TRAFAC class translation factor GTPase superfamily. Classic translation factor GTPase family. PrfC subfamily.

The protein resides in the cytoplasm. Its function is as follows. Increases the formation of ribosomal termination complexes and stimulates activities of RF-1 and RF-2. It binds guanine nucleotides and has strong preference for UGA stop codons. It may interact directly with the ribosome. The stimulation of RF-1 and RF-2 is significantly reduced by GTP and GDP, but not by GMP. This chain is Peptide chain release factor 3, found in Nitratidesulfovibrio vulgaris (strain ATCC 29579 / DSM 644 / CCUG 34227 / NCIMB 8303 / VKM B-1760 / Hildenborough) (Desulfovibrio vulgaris).